The chain runs to 103 residues: Large ribosomal subunit protein bL21 (103 aa).

Belongs to the bacterial ribosomal protein bL21 family. Part of the 50S ribosomal subunit. Contacts protein L20.

This protein binds to 23S rRNA in the presence of protein L20. The sequence is that of Large ribosomal subunit protein bL21 from Maridesulfovibrio salexigens (strain ATCC 14822 / DSM 2638 / NCIMB 8403 / VKM B-1763) (Desulfovibrio salexigens).